The primary structure comprises 501 residues: ADP,ATP carrier protein 3 (501 aa).

The next 12 membrane-spanning stretches (helical) occupy residues 23–43, 59–79, 90–110, 146–166, 183–203, 227–247, 293–313, 326–346, 361–381, 383–403, 446–466, and 470–490; these read LKLF…FGAL, IISF…TILY, YIFY…AYII, YALM…LMFW, PVLG…LVFF, IMLQ…MFLF, IALL…PWKA, VNFM…FMII, LLTP…IIFI, EIGT…VGAI, FGKS…PTAT, and IIIY…WNII.

This sequence belongs to the ADP/ATP translocase tlc family.

It localises to the cell membrane. Functionally, provides the rickettsial cell with host ATP in exchange for rickettsial ADP. This is an obligate exchange system. This energy acquiring activity is an important component of rickettsial parasitism. The protein is ADP,ATP carrier protein 3 (tlcC) of Rickettsia prowazekii (strain Madrid E).